A 271-amino-acid chain; its full sequence is Thiosulfate sulfurtransferase (271 aa).

Rhodanese domains follow at residues Gly-21–Arg-129 and Gly-159–Glu-270. Catalysis depends on Cys-230, which acts as the Cysteine persulfide intermediate.

Its subcellular location is the cytoplasm. It carries out the reaction thiosulfate + hydrogen cyanide = thiocyanate + sulfite + 2 H(+). Catalyzes the sulfur transfer reaction from thiosulfate to cyanide, thus converting cyanide to the less toxic thiocyanate. Contributes to P.aeruginosa survival under cyanogenic conditions, and thus provides the bacterium with a defense mechanism against endogenous cyanide toxicity. Is the main cytoplasmic rhodanese in P.aeruginosa, accounting for 90% of total rhodanese activity. The sequence is that of Thiosulfate sulfurtransferase from Pseudomonas aeruginosa (strain ATCC 15692 / DSM 22644 / CIP 104116 / JCM 14847 / LMG 12228 / 1C / PRS 101 / PAO1).